The primary structure comprises 247 residues: Pleckstrin homology domain-containing family F member 2 (247 aa).

A PH domain is found at 35-131; it reads VLIGEGVLTK…WMSHINKCVS (97 aa). An FYVE-type zinc finger spans residues 152–212; it reads DSEATVCMRC…VCEFCYKQLS (61 aa). The Zn(2+) site is built by cysteine 158, cysteine 161, cysteine 175, cysteine 178, cysteine 183, cysteine 186, cysteine 204, and cysteine 207. The disordered stretch occupies residues 213–247; it reads TGATLPPRSDSYSRQGSDFGSNNISDDDDDDDSSD. Over residues 222–236 the composition is skewed to polar residues; sequence DSYSRQGSDFGSNNI. Residues 237–247 show a composition bias toward acidic residues; it reads SDDDDDDDSSD.

It localises to the early endosome membrane. The protein resides in the endoplasmic reticulum. Functionally, may play a role in early endosome fusion upstream of RAB5, hence regulating receptor trafficking and fluid-phase transport. Enhances cellular sensitivity to TNF-induced apoptosis. In Danio rerio (Zebrafish), this protein is Pleckstrin homology domain-containing family F member 2 (plekhf2).